The sequence spans 444 residues: ATP-dependent protease ATPase subunit HslU (444 aa).

Residues Ile-20 and 62-67 contribute to the ATP site; that span reads GVGKTE. Positions 130–158 are disordered; that stretch reads EDRILDALVPPPRGASGEPERGEDNSARQ. Positions 257, 322, and 394 each coordinate ATP.

It belongs to the ClpX chaperone family. HslU subfamily. As to quaternary structure, a double ring-shaped homohexamer of HslV is capped on each side by a ring-shaped HslU homohexamer. The assembly of the HslU/HslV complex is dependent on binding of ATP.

It is found in the cytoplasm. ATPase subunit of a proteasome-like degradation complex; this subunit has chaperone activity. The binding of ATP and its subsequent hydrolysis by HslU are essential for unfolding of protein substrates subsequently hydrolyzed by HslV. HslU recognizes the N-terminal part of its protein substrates and unfolds these before they are guided to HslV for hydrolysis. The sequence is that of ATP-dependent protease ATPase subunit HslU from Bordetella bronchiseptica (strain ATCC BAA-588 / NCTC 13252 / RB50) (Alcaligenes bronchisepticus).